Reading from the N-terminus, the 329-residue chain is DNA repair and recombination protein RadA (329 aa).

107–114 (GEFGSGKS) contacts ATP.

It belongs to the eukaryotic RecA-like protein family.

In terms of biological role, involved in DNA repair and in homologous recombination. Binds and assemble on single-stranded DNA to form a nucleoprotein filament. Hydrolyzes ATP in a ssDNA-dependent manner and promotes DNA strand exchange between homologous DNA molecules. This Methanocorpusculum labreanum (strain ATCC 43576 / DSM 4855 / Z) protein is DNA repair and recombination protein RadA.